A 195-amino-acid chain; its full sequence is Guanylate kinase (195 aa).

The region spanning 10 to 189 (GRLIVFSAPS…TVDAVATRIA (180 aa)) is the Guanylate kinase-like domain. 17–24 (APSGTGKS) is a binding site for ATP.

Belongs to the guanylate kinase family.

It is found in the cytoplasm. It catalyses the reaction GMP + ATP = GDP + ADP. In terms of biological role, essential for recycling GMP and indirectly, cGMP. This chain is Guanylate kinase, found in Chlorobaculum tepidum (strain ATCC 49652 / DSM 12025 / NBRC 103806 / TLS) (Chlorobium tepidum).